We begin with the raw amino-acid sequence, 276 residues long: Protein HemX (276 aa).

A run of 8 helical transmembrane segments spans residues 9–29, 40–60, 66–86, 93–113, 132–152, 187–207, 217–237, and 247–267; these read LNEGTIVIYALSVLFYFIDFL, FWLLSIVWTLQTVYLAYFMWV, VLNVTEALYFYAWVLVTLSLV, VDFIVFFTNVIGFSMIAIHTF, LVIHITMAILSYGAFSLSFVF, VLNVIGVPMLLLSLILGVIWA, FDAKVLGSFVVLLLYSYYLYI, and VAALWNTACFLVLMINYFLLG.

The protein to M.leprae U1620K.

It localises to the cell membrane. Functionally, required for HemL synthesis. In Bacillus subtilis (strain 168), this protein is Protein HemX (hemX).